Here is a 426-residue protein sequence, read N- to C-terminus: 26S proteasome regulatory subunit 7 homolog A (426 aa).

Gly209–Thr216 lines the ATP pocket. Residues Lys400 and Lys415 each participate in a glycyl lysine isopeptide (Lys-Gly) (interchain with G-Cter in ubiquitin) cross-link.

It belongs to the AAA ATPase family. Component of the 19S regulatory particle (RP/PA700) base subcomplex of the 26S proteasome. The 26S proteasome is composed of a core protease (CP), known as the 20S proteasome, capped at one or both ends by the 19S regulatory particle (RP/PA700). The RP/PA700 complex is composed of at least 17 different subunits in two subcomplexes, the base and the lid, which form the portions proximal and distal to the 20S proteolytic core, respectively.

The protein localises to the cytoplasm. It is found in the nucleus. Functionally, the 26S proteasome is involved in the ATP-dependent degradation of ubiquitinated proteins. The regulatory (or ATPase) complex confers ATP dependency and substrate specificity to the 26S complex. In Arabidopsis thaliana (Mouse-ear cress), this protein is 26S proteasome regulatory subunit 7 homolog A (RPT1A).